The sequence spans 164 residues: Cyclic pyranopterin monophosphate synthase (164 aa).

Substrate is bound by residues Met75–His77 and Met112–Glu113. The active site involves Asp127.

The protein belongs to the MoaC family. In terms of assembly, homohexamer; trimer of dimers.

The catalysed reaction is (8S)-3',8-cyclo-7,8-dihydroguanosine 5'-triphosphate = cyclic pyranopterin phosphate + diphosphate. It participates in cofactor biosynthesis; molybdopterin biosynthesis. Its function is as follows. Catalyzes the conversion of (8S)-3',8-cyclo-7,8-dihydroguanosine 5'-triphosphate to cyclic pyranopterin monophosphate (cPMP). The sequence is that of Cyclic pyranopterin monophosphate synthase from Desulforamulus reducens (strain ATCC BAA-1160 / DSM 100696 / MI-1) (Desulfotomaculum reducens).